A 527-amino-acid chain; its full sequence is GMP synthase [glutamine-hydrolyzing] (527 aa).

The 190-residue stretch at 13 to 202 (TILVLDFGSQ…AVDICGAAQK (190 aa)) folds into the Glutamine amidotransferase type-1 domain. C89 acts as the Nucleophile in catalysis. Catalysis depends on residues H176 and E178. Residues 203–402 (WSMENFVDTE…MGIPHDLVWR (200 aa)) enclose the GMPS ATP-PPase domain. 231 to 237 (SGGVDST) is an ATP binding site. Residues R304, D464, K519, and E525 each coordinate XMP.

As to quaternary structure, homodimer. Mg(2+) serves as cofactor.

The protein resides in the cytoplasm. It is found in the cytosol. The enzyme catalyses XMP + L-glutamine + ATP + H2O = GMP + L-glutamate + AMP + diphosphate + 2 H(+). Its pathway is purine metabolism; GMP biosynthesis; GMP from XMP (L-Gln route): step 1/1. Functionally, catalyzes the conversion of xanthine monophosphate (XMP) to GMP in the presence of glutamine and ATP through an adenyl-XMP intermediate. The polypeptide is GMP synthase [glutamine-hydrolyzing] (GUA1) (Yarrowia lipolytica (strain CLIB 122 / E 150) (Yeast)).